A 233-amino-acid chain; its full sequence is Large ribosomal subunit protein uL1 (233 aa).

This sequence belongs to the universal ribosomal protein uL1 family. Part of the 50S ribosomal subunit.

In terms of biological role, binds directly to 23S rRNA. The L1 stalk is quite mobile in the ribosome, and is involved in E site tRNA release. Protein L1 is also a translational repressor protein, it controls the translation of the L11 operon by binding to its mRNA. The chain is Large ribosomal subunit protein uL1 from Syntrophomonas wolfei subsp. wolfei (strain DSM 2245B / Goettingen).